Consider the following 693-residue polypeptide: Golgin subfamily A member 6B (693 aa).

The segment covering 1–11 (MWPQPYLPPHP) has biased composition (pro residues). Disordered stretches follow at residues 1-72 (MWPQ…SQYQ), 497-551 (LPGE…VERR), 629-650 (NPAD…AGEQ), and 660-679 (NNVE…DNPT). Residues 77-611 (ALESSSVTIS…KLLELQELVL (535 aa)) are a coiled coil. Residues 537–551 (LPKEKADGTEQVERR) show a composition bias toward basic and acidic residues.

The protein belongs to the GOLGA6 family.

The sequence is that of Golgin subfamily A member 6B (GOLGA6B) from Homo sapiens (Human).